The following is a 115-amino-acid chain: UPF0738 protein SAB0871 (115 aa).

It belongs to the UPF0738 family.

The sequence is that of UPF0738 protein SAB0871 from Staphylococcus aureus (strain bovine RF122 / ET3-1).